The sequence spans 612 residues: Elongation factor 4 (612 aa).

In terms of domain architecture, tr-type G spans 11–193; that stretch reads KHIRNFAIVA…KVVKDIPAPS (183 aa). GTP-binding positions include 23–28 and 140–143; these read DHGKST and NKID.

This sequence belongs to the TRAFAC class translation factor GTPase superfamily. Classic translation factor GTPase family. LepA subfamily.

It is found in the cell membrane. The catalysed reaction is GTP + H2O = GDP + phosphate + H(+). Its function is as follows. Required for accurate and efficient protein synthesis under certain stress conditions. May act as a fidelity factor of the translation reaction, by catalyzing a one-codon backward translocation of tRNAs on improperly translocated ribosomes. Back-translocation proceeds from a post-translocation (POST) complex to a pre-translocation (PRE) complex, thus giving elongation factor G a second chance to translocate the tRNAs correctly. Binds to ribosomes in a GTP-dependent manner. This Lactobacillus helveticus (strain DPC 4571) protein is Elongation factor 4.